A 503-amino-acid chain; its full sequence is Cytochrome P450 3A29 (503 aa).

C442 lines the heme pocket.

Belongs to the cytochrome P450 family. The cofactor is heme.

It localises to the endoplasmic reticulum membrane. The protein resides in the microsome membrane. It carries out the reaction an organic molecule + reduced [NADPH--hemoprotein reductase] + O2 = an alcohol + oxidized [NADPH--hemoprotein reductase] + H2O + H(+). In terms of biological role, cytochromes P450 are a group of heme-thiolate monooxygenases. In liver microsomes, this enzyme is involved in an NADPH-dependent electron transport pathway. It oxidizes a variety of structurally unrelated compounds, including steroids, fatty acids, and xenobiotics. This is Cytochrome P450 3A29 (CYP3A29) from Sus scrofa (Pig).